Reading from the N-terminus, the 281-residue chain is L-ornithine N(alpha)-acyltransferase (281 aa).

This sequence belongs to the acetyltransferase family. OlsB subfamily.

The catalysed reaction is a (3R)-hydroxyacyl-[ACP] + L-ornithine = a lyso-ornithine lipid + holo-[ACP] + H(+). It participates in lipid metabolism. In terms of biological role, catalyzes the first step in the biosynthesis of ornithine lipids, which are phosphorus-free membrane lipids. Catalyzes the 3-hydroxyacyl-acyl carrier protein-dependent acylation of ornithine to form lyso-ornithine lipid (LOL). The sequence is that of L-ornithine N(alpha)-acyltransferase from Brucella abortus (strain 2308).